The chain runs to 414 residues: Mu-like prophage FluMu F protein (414 aa).

To phage Mu protein F.

Involved in virion morphogenesis. The protein is Mu-like prophage FluMu F protein of Haemophilus influenzae (strain ATCC 51907 / DSM 11121 / KW20 / Rd).